Consider the following 457-residue polypeptide: Cysteine desulfurase (457 aa).

The pyridoxal 5'-phosphate site is built by Ala127, Thr128, Gln235, Ser255, and His257. Residue Lys258 is modified to N6-(pyridoxal phosphate)lysine. Thr295 contacts pyridoxal 5'-phosphate. The active-site Cysteine persulfide intermediate is the Cys381. Residue Cys381 participates in [2Fe-2S] cluster binding. Cys381 is a binding site for Zn(2+). Residue Cys381 is modified to Cysteine persulfide.

This sequence belongs to the class-V pyridoxal-phosphate-dependent aminotransferase family. NifS/IscS subfamily. Homodimer. Component of the mitochondrial core iron-sulfur cluster (ISC) complex composed of NFS1, LYRM4, NDUFAB1, ISCU, FXN, and FDX2; this complex is a heterohexamer containing two copies of each monomer. Component of cyteine desulfurase complex composed of NFS1, LYRM4 and NDUFAB1; this complex contributes to the activation of cysteine desulfurase activity and NFS1 stabilization. Interacts (homodimer form) with ISCU (D-state); each monomer interacts with the C-terminal regions of each NFS1 monomer. Interacts with HSPA9. Interacts (via homodimer form) with FDX2. Interacts (via homodimer form) with FXN. Interacts with LYRM4. Component of a complex composed of FXN, NFS1, LYRM4 and ISCU. In terms of assembly, monomer. Homodimer. Oligomer. Interacts with ISCU. Component of the cysteine desulfurase complex composed of NFS1 and LYRM4; this complex contributes to the activation of cysteine desulfurase activity. Interacts with MOCS3. Requires pyridoxal 5'-phosphate as cofactor. Post-translationally, N-gluconoylated. Cysteine persulfide intermediate is reduced by thiol-containing molecules like glutathione and L-cysteine. Persulfide reduction is a rate-limiting step of cysteine desulfurase catalytic cycle. Predominantly expressed in heart and skeletal muscle. Also found in brain, liver and pancreas.

It is found in the mitochondrion. The protein localises to the cytoplasm. It localises to the nucleus. The protein resides in the cytoskeleton. Its subcellular location is the microtubule organizing center. It is found in the centrosome. The enzyme catalyses (sulfur carrier)-H + L-cysteine = (sulfur carrier)-SH + L-alanine. It carries out the reaction L-cysteinyl-[cysteine desulfurase] + L-cysteine = S-sulfanyl-L-cysteinyl-[cysteine desulfurase] + L-alanine. With respect to regulation, active only in complex with LYRM4. Functionally, cysteine desulfurase, of the core iron-sulfur cluster (ISC) assembly complex, that catalyzes the desulfuration of L-cysteine to L-alanine, as component of the cysteine desulfurase complex, leading to the formation of a cysteine persulfide intermediate at the active site cysteine residue and participates in the [2Fe-2S] clusters assembly on the scaffolding protein ISCU. The persulfide is then transferred on the flexible Cys loop from the catalytic site of NFS1 to the surface of NFS1. After the NFS1-linked persulfide sulfur is transferred to one of the conserved Cys residues of the scaffold, a reaction assisted by FXN. The core iron-sulfur cluster (ISC) assembly complex is involved in the de novo synthesis of a [2Fe-2S] cluster, the first step of the mitochondrial iron-sulfur protein biogenesis. This process is initiated by the cysteine desulfurase complex (NFS1:LYRM4:NDUFAB1) that produces persulfide which is delivered on the scaffold protein ISCU in a FXN-dependent manner. Then this complex is stabilized by FDX2 which provides reducing equivalents to accomplish the [2Fe-2S] cluster assembly. Finally, the [2Fe-2S] cluster is transferred from ISCU to chaperone proteins, including HSCB, HSPA9 and GLRX5. Its function is as follows. May catalyze the desulfuration of L-cysteine to L-alanine as component of the cysteine desulfurase complex (NFS1:LYRM4), leading to the formation of a cysteine persulfide intermediate. Acts as a sulfur donor for MOCS3 by transferring the sulfur of the cysteine persulfide intermediate on MOCS3. The polypeptide is Cysteine desulfurase (Homo sapiens (Human)).